Here is a 197-residue protein sequence, read N- to C-terminus: 3-isopropylmalate dehydratase small subunit (197 aa).

The protein belongs to the LeuD family. LeuD type 1 subfamily. As to quaternary structure, heterodimer of LeuC and LeuD.

It catalyses the reaction (2R,3S)-3-isopropylmalate = (2S)-2-isopropylmalate. It functions in the pathway amino-acid biosynthesis; L-leucine biosynthesis; L-leucine from 3-methyl-2-oxobutanoate: step 2/4. Functionally, catalyzes the isomerization between 2-isopropylmalate and 3-isopropylmalate, via the formation of 2-isopropylmaleate. This Geobacillus sp. (strain WCH70) protein is 3-isopropylmalate dehydratase small subunit.